We begin with the raw amino-acid sequence, 143 residues long: MQLNSIKPAPGAKHPKRRVGRGIGSGLGKTAGRGHKGQKSRAGGFHKVGFEGGQMPLQRRLPKRGFVSPTKKNDAEVRLSALDRIPGDIIDILILKQAGLVSGSALNVKVILSGKIERAVKLQGIPVTKGAKAAIEAAGGSVE.

Residues 1–54 (MQLNSIKPAPGAKHPKRRVGRGIGSGLGKTAGRGHKGQKSRAGGFHKVGFEGGQ) are disordered. Residues 21 to 31 (RGIGSGLGKTA) show a composition bias toward gly residues.

It belongs to the universal ribosomal protein uL15 family. As to quaternary structure, part of the 50S ribosomal subunit.

Its function is as follows. Binds to the 23S rRNA. The protein is Large ribosomal subunit protein uL15 of Nitrosospira multiformis (strain ATCC 25196 / NCIMB 11849 / C 71).